The chain runs to 312 residues: Small ribosomal subunit protein uS2m (312 aa).

Belongs to the universal ribosomal protein uS2 family.

It is found in the mitochondrion. The sequence is that of Small ribosomal subunit protein uS2m (RPS2) from Acanthamoeba castellanii (Amoeba).